The primary structure comprises 874 residues: Protein translocase subunit SecA (874 aa).

Residues glutamine 85, 103–107 (GEGKT), and aspartate 492 each bind ATP. A compositionally biased stretch (basic and acidic residues) spans 839–854 (EEGPKKPYRREQKIGR). The interval 839 to 864 (EEGPKKPYRREQKIGRNDPCPCGSGK) is disordered. Positions 858, 860, 869, and 870 each coordinate Zn(2+).

The protein belongs to the SecA family. Monomer and homodimer. Part of the essential Sec protein translocation apparatus which comprises SecA, SecYEG and auxiliary proteins SecDF. Other proteins may also be involved. Zn(2+) serves as cofactor.

It is found in the cell membrane. It localises to the cytoplasm. The catalysed reaction is ATP + H2O + cellular proteinSide 1 = ADP + phosphate + cellular proteinSide 2.. In terms of biological role, part of the Sec protein translocase complex. Interacts with the SecYEG preprotein conducting channel. Has a central role in coupling the hydrolysis of ATP to the transfer of proteins into and across the cell membrane, serving as an ATP-driven molecular motor driving the stepwise translocation of polypeptide chains across the membrane. This chain is Protein translocase subunit SecA, found in Carboxydothermus hydrogenoformans (strain ATCC BAA-161 / DSM 6008 / Z-2901).